Reading from the N-terminus, the 108-residue chain is uncharacterized protein (108 aa).

The segment at 1–108 (MAKVTSEPQK…DKEQSETSVL (108 aa)) is disordered. Over residues 26–56 (KGRKKGKTPRQRRSRSGVKGLKTTRKAKRPL) the composition is skewed to basic residues. The segment covering 58–70 (GSSSQKAGETNTP) has biased composition (polar residues). Over residues 73-92 (KPKKARGPILRGRYHRLKEK) the composition is skewed to basic residues. Positions 93-108 (MKKEEADKEQSETSVL) are enriched in basic and acidic residues.

This is an uncharacterized protein from Homo sapiens (Human).